The following is a 229-amino-acid chain: Probable methylthioribulose-1-phosphate dehydratase (229 aa).

Substrate is bound at residue Cys-97. Positions 115 and 117 each coordinate Zn(2+). Residue Glu-139 is the Proton donor/acceptor of the active site. His-195 is a binding site for Zn(2+).

Belongs to the aldolase class II family. MtnB subfamily. Requires Zn(2+) as cofactor.

The protein localises to the cytoplasm. It carries out the reaction 5-(methylsulfanyl)-D-ribulose 1-phosphate = 5-methylsulfanyl-2,3-dioxopentyl phosphate + H2O. It participates in amino-acid biosynthesis; L-methionine biosynthesis via salvage pathway; L-methionine from S-methyl-5-thio-alpha-D-ribose 1-phosphate: step 2/6. In terms of biological role, catalyzes the dehydration of methylthioribulose-1-phosphate (MTRu-1-P) into 2,3-diketo-5-methylthiopentyl-1-phosphate (DK-MTP-1-P). The polypeptide is Probable methylthioribulose-1-phosphate dehydratase (Acyrthosiphon pisum (Pea aphid)).